The chain runs to 59 residues: uncharacterized protein (59 aa).

The helical transmembrane segment at 7–24 (FLLVFIILAQLLSCTPSA) threads the bilayer.

The protein localises to the membrane. This is an uncharacterized protein from Rickettsia prowazekii (strain Madrid E).